The primary structure comprises 569 residues: Sulfite reductase [NADPH] hemoprotein beta-component (569 aa).

[4Fe-4S] cluster-binding residues include C433, C439, C478, and C482. Residue C482 participates in siroheme binding.

The protein belongs to the nitrite and sulfite reductase 4Fe-4S domain family. As to quaternary structure, alpha(8)-beta(8). The alpha component is a flavoprotein, the beta component is a hemoprotein. The cofactor is siroheme. Requires [4Fe-4S] cluster as cofactor.

It carries out the reaction hydrogen sulfide + 3 NADP(+) + 3 H2O = sulfite + 3 NADPH + 4 H(+). The protein operates within sulfur metabolism; hydrogen sulfide biosynthesis; hydrogen sulfide from sulfite (NADPH route): step 1/1. Its function is as follows. Component of the sulfite reductase complex that catalyzes the 6-electron reduction of sulfite to sulfide. This is one of several activities required for the biosynthesis of L-cysteine from sulfate. In Buchnera aphidicola subsp. Acyrthosiphon pisum (strain 5A), this protein is Sulfite reductase [NADPH] hemoprotein beta-component.